Here is a 588-residue protein sequence, read N- to C-terminus: uncharacterized protein (588 aa).

This is an uncharacterized protein from Schizosaccharomyces pombe (strain 972 / ATCC 24843) (Fission yeast).